The primary structure comprises 322 residues: tRNA uridine(34) hydroxylase (322 aa).

Residues 125–219 (QSPDTVVIDA…YGKDPEVQGK (95 aa)) form the Rhodanese domain. Residue cysteine 179 is the Cysteine persulfide intermediate of the active site.

The protein belongs to the TrhO family.

The catalysed reaction is uridine(34) in tRNA + AH2 + O2 = 5-hydroxyuridine(34) in tRNA + A + H2O. Its function is as follows. Catalyzes oxygen-dependent 5-hydroxyuridine (ho5U) modification at position 34 in tRNAs. This chain is tRNA uridine(34) hydroxylase, found in Bacillus pumilus (strain SAFR-032).